The sequence spans 291 residues: 4-hydroxybenzoate octaprenyltransferase (291 aa).

The next 8 membrane-spanning stretches (helical) occupy residues Pro23 to Gly43, Pro47 to Ile67, Leu98 to Leu118, Phe139 to Tyr159, Trp171 to Val191, Ile216 to Leu236, Ala238 to Leu258, and Phe267 to Ala287.

This sequence belongs to the UbiA prenyltransferase family. It depends on Mg(2+) as a cofactor.

It is found in the cell inner membrane. The catalysed reaction is all-trans-octaprenyl diphosphate + 4-hydroxybenzoate = 4-hydroxy-3-(all-trans-octaprenyl)benzoate + diphosphate. It participates in cofactor biosynthesis; ubiquinone biosynthesis. Catalyzes the prenylation of para-hydroxybenzoate (PHB) with an all-trans polyprenyl group. Mediates the second step in the final reaction sequence of ubiquinone-8 (UQ-8) biosynthesis, which is the condensation of the polyisoprenoid side chain with PHB, generating the first membrane-bound Q intermediate 3-octaprenyl-4-hydroxybenzoate. This is 4-hydroxybenzoate octaprenyltransferase from Ralstonia nicotianae (strain ATCC BAA-1114 / GMI1000) (Ralstonia solanacearum).